The chain runs to 255 residues: Type III pantothenate kinase (255 aa).

6 to 13 (DVGNTHIV) is an ATP binding site. Residues Tyr100 and 107-110 (GADR) each bind substrate. Asp109 serves as the catalytic Proton acceptor. Asp129 is a binding site for K(+). Residue Thr132 coordinates ATP. Thr184 contributes to the substrate binding site.

This sequence belongs to the type III pantothenate kinase family. Homodimer. Requires NH4(+) as cofactor. It depends on K(+) as a cofactor.

The protein resides in the cytoplasm. The enzyme catalyses (R)-pantothenate + ATP = (R)-4'-phosphopantothenate + ADP + H(+). It participates in cofactor biosynthesis; coenzyme A biosynthesis; CoA from (R)-pantothenate: step 1/5. Catalyzes the phosphorylation of pantothenate (Pan), the first step in CoA biosynthesis. In Ruminiclostridium cellulolyticum (strain ATCC 35319 / DSM 5812 / JCM 6584 / H10) (Clostridium cellulolyticum), this protein is Type III pantothenate kinase.